We begin with the raw amino-acid sequence, 1006 residues long: UPF0182 protein Arth_2749 (1006 aa).

A run of 7 helical transmembrane segments spans residues 18 to 38, 64 to 84, 115 to 135, 168 to 188, 211 to 231, 260 to 280, and 287 to 307; these read GALT…IFFA, IIIF…AIRI, VVMI…AASQ, FLGF…IAGI, QIHL…NFWL, SILA…AVIG, and IGTA…PWVI. 3 disordered regions span residues 490–519, 896–923, and 975–1006; these read GAPE…FTGN, KAGD…GGTD, and LGSE…SPSN. The span at 495–509 shows a compositional bias: basic and acidic residues; the sequence is SPHREQDRPAGKEGD. Low complexity-rich tracts occupy residues 911–923 and 979–1000; these read AGGS…GGTD and GASP…AATP.

Belongs to the UPF0182 family.

It localises to the cell membrane. This is UPF0182 protein Arth_2749 from Arthrobacter sp. (strain FB24).